The sequence spans 482 residues: ATP synthase subunit beta (482 aa).

An ATP-binding site is contributed by glycine 162–threonine 169.

F-type ATPases have 2 components, CF(1) - the catalytic core - and CF(0) - the membrane proton channel. CF(1) has five subunits: alpha(3), beta(3), gamma(1), delta(1), epsilon(1). CF(0) has four main subunits: a(1), b(1), b'(1) and c(9-12).

The protein resides in the cellular thylakoid membrane. The catalysed reaction is ATP + H2O + 4 H(+)(in) = ADP + phosphate + 5 H(+)(out). Its activity is regulated as follows. Inhibited by dicyclohexylcarbodiimide. In terms of biological role, produces ATP from ADP in the presence of a proton gradient across the membrane. The catalytic sites are hosted primarily by the beta subunits. Functionally, the complex from the organism is particularly stable to disruption and remains functional after 6 hrs at 55 degrees Celsius. The chain is ATP synthase subunit beta from Thermosynechococcus vestitus (strain NIES-2133 / IAM M-273 / BP-1).